Here is a 57-residue protein sequence, read N- to C-terminus: MPTVNILSYFAFSVEAVLFPMSSELWEKGYREALGYGVEKICLYSFVLVLPIAILMA.

Helical transmembrane passes span 4 to 26 (VNIL…SELW) and 33 to 55 (ALGY…IAIL).

The protein localises to the cell membrane. This is an uncharacterized protein from Methanocaldococcus jannaschii (strain ATCC 43067 / DSM 2661 / JAL-1 / JCM 10045 / NBRC 100440) (Methanococcus jannaschii).